A 245-amino-acid chain; its full sequence is Nisin immunity protein (245 aa).

Positions 1-19 are cleaved as a signal peptide; that stretch reads MRRYLILIVALIGITGLSG. Residue C20 is the site of N-palmitoyl cysteine attachment. C20 is lipidated: S-diacylglycerol cysteine.

Its subcellular location is the cell membrane. Involved in immunity against exogenously supplied nisin. This chain is Nisin immunity protein (nisI), found in Lactococcus lactis subsp. lactis (Streptococcus lactis).